Consider the following 165-residue polypeptide: 2-C-methyl-D-erythritol 2,4-cyclodiphosphate synthase (165 aa).

A divalent metal cation contacts are provided by aspartate 9 and histidine 11. 4-CDP-2-C-methyl-D-erythritol 2-phosphate-binding positions include 9–11 and 35–36; these read DVH and HS. Histidine 43 contacts a divalent metal cation. 4-CDP-2-C-methyl-D-erythritol 2-phosphate-binding positions include 57-59, 101-107, 133-136, phenylalanine 140, and arginine 143; these read DIG, AQAPKML, and TTTE.

This sequence belongs to the IspF family. In terms of assembly, homotrimer. The cofactor is a divalent metal cation.

The catalysed reaction is 4-CDP-2-C-methyl-D-erythritol 2-phosphate = 2-C-methyl-D-erythritol 2,4-cyclic diphosphate + CMP. Its pathway is isoprenoid biosynthesis; isopentenyl diphosphate biosynthesis via DXP pathway; isopentenyl diphosphate from 1-deoxy-D-xylulose 5-phosphate: step 4/6. Functionally, involved in the biosynthesis of isopentenyl diphosphate (IPP) and dimethylallyl diphosphate (DMAPP), two major building blocks of isoprenoid compounds. Catalyzes the conversion of 4-diphosphocytidyl-2-C-methyl-D-erythritol 2-phosphate (CDP-ME2P) to 2-C-methyl-D-erythritol 2,4-cyclodiphosphate (ME-CPP) with a corresponding release of cytidine 5-monophosphate (CMP). In Pseudoalteromonas translucida (strain TAC 125), this protein is 2-C-methyl-D-erythritol 2,4-cyclodiphosphate synthase.